Reading from the N-terminus, the 491-residue chain is Ribosome biogenesis protein YTM1 (491 aa).

A ubiquitin-like (UBL) domain region spans residues 8–103; sequence IKIKFTTNES…EAFLTIEYTR (96 aa). The interval 113 to 491 is sufficient for interaction with ERB1 and association with 66S pre-ribosomes; sequence SFQNDDWISS…QINKGSDISK (379 aa). WD repeat units follow at residues 128–167, 169–207, 241–280, 318–358, 360–399, 409–449, and 456–491; these read RNLS…EKQY, GHSA…VVDQ, GHKA…MAKI, GHTE…CVDT, TTGF…SNTN, GHTN…SLYT, and STKS…DISK. Positions 205–228 are disordered; that stretch reads VDQNEEDEEENEANEGDDGDNDME. The segment covering 207-225 has biased composition (acidic residues); the sequence is QNEEDEEENEANEGDDGDN.

Belongs to the WD repeat WDR12/YTM1 family. In terms of assembly, component of the NOP7 complex, composed of ERB1, NOP7 and YTM1. The complex is held together by ERB1, which interacts with NOP7 via its N-terminal domain and with YTM1 via a high-affinity interaction between the seven-bladed beta-propeller domains of the 2 proteins. The NOP7 complex associates with the 66S pre-ribosome. Interacts (via UBL domain) with MDN1 (via VWFA/MIDAS domain).

Its subcellular location is the nucleus. The protein localises to the nucleolus. It localises to the nucleoplasm. In terms of biological role, component of the NOP7 complex, which is required for maturation of the 25S and 5.8S ribosomal RNAs and formation of the 60S ribosome. This is Ribosome biogenesis protein YTM1 from Lodderomyces elongisporus (strain ATCC 11503 / CBS 2605 / JCM 1781 / NBRC 1676 / NRRL YB-4239) (Yeast).